We begin with the raw amino-acid sequence, 104 residues long: Protein SMALL AUXIN UP-REGULATED RNA 12 (104 aa).

Belongs to the ARG7 family. In terms of tissue distribution, expressed in flowers and etiolated hypocotyls.

It localises to the cell membrane. Functionally, provide a mechanistic link between auxin and plasma membrane H(+)-ATPases (PM H(+)-ATPases, e.g. AHA1 and AHA2), and triggers PM H(+)-ATPases activity by promoting phosphorylation of their C-terminal autoinhibitory domain as a result of PP2C-D subfamily of type 2C phosphatases inhibition, thus leading to the acidification of the apoplast and the facilitation of solutes and water uptake to drive cell expansion. Triggers plant growth probably by promoting cell elongation. Regulates branch angles and bending. This is Protein SMALL AUXIN UP-REGULATED RNA 12 from Arabidopsis thaliana (Mouse-ear cress).